The chain runs to 236 residues: Small ribosomal subunit protein uS3 (236 aa).

Residues 39-107 enclose the KH type-2 domain; it reads IRSYVLEELR…ETSLNIVEIR (69 aa). The disordered stretch occupies residues 214–236; sequence ASERRATEADQSGSSSNRRRENA.

This sequence belongs to the universal ribosomal protein uS3 family. Part of the 30S ribosomal subunit. Forms a tight complex with proteins S10 and S14.

In terms of biological role, binds the lower part of the 30S subunit head. Binds mRNA in the 70S ribosome, positioning it for translation. The sequence is that of Small ribosomal subunit protein uS3 from Bartonella tribocorum (strain CIP 105476 / IBS 506).